The chain runs to 110 residues: Progonadoliberin-2 (110 aa).

Positions 1-26 are cleaved as a signal peptide; that stretch reads MASIGQGLVLLLLLLLLTAQPGPLKA. Positions 25–85 are disordered; the sequence is KAQHWSHGWY…KALAPPEDTV (61 aa). At glycine 36 the chain carries Glycine amide.

The protein belongs to the GnRH family. As to expression, midbrain.

It localises to the secreted. Stimulates the secretion of gonadotropins; it stimulates the secretion of both luteinizing and follicle-stimulating hormones. The protein is Progonadoliberin-2 (GNRH2) of Suncus murinus (Asian house shrew).